The chain runs to 387 residues: 1-deoxy-D-xylulose 5-phosphate reductoisomerase (387 aa).

Residues Thr10, Gly11, Ile13, Asn38, and Asn122 each contribute to the NADPH site. A 1-deoxy-D-xylulose 5-phosphate-binding site is contributed by Lys123. Position 124 (Glu124) interacts with NADPH. Asp148 contributes to the Mn(2+) binding site. 4 residues coordinate 1-deoxy-D-xylulose 5-phosphate: Ser149, Glu150, Ser174, and His197. Glu150 is a Mn(2+) binding site. Residue Gly203 coordinates NADPH. Ser210, Asn215, Lys216, and Glu219 together coordinate 1-deoxy-D-xylulose 5-phosphate. Residue Glu219 participates in Mn(2+) binding.

This sequence belongs to the DXR family. Mg(2+) serves as cofactor. Requires Mn(2+) as cofactor.

It catalyses the reaction 2-C-methyl-D-erythritol 4-phosphate + NADP(+) = 1-deoxy-D-xylulose 5-phosphate + NADPH + H(+). The protein operates within isoprenoid biosynthesis; isopentenyl diphosphate biosynthesis via DXP pathway; isopentenyl diphosphate from 1-deoxy-D-xylulose 5-phosphate: step 1/6. In terms of biological role, catalyzes the NADPH-dependent rearrangement and reduction of 1-deoxy-D-xylulose-5-phosphate (DXP) to 2-C-methyl-D-erythritol 4-phosphate (MEP). This is 1-deoxy-D-xylulose 5-phosphate reductoisomerase from Ehrlichia ruminantium (strain Welgevonden).